The chain runs to 129 residues: Membrane protein 0 (129 aa).

The segment at methionine 1–aspartate 25 is disordered. The PPXY motif motif lies at proline 44–tyrosine 47. The helical transmembrane segment at phenylalanine 100 to phenylalanine 120 threads the bilayer.

It belongs to the varicellovirus ORF0 protein family. As to quaternary structure, interacts with host ITCH; this interaction probably mediates ITCH degradation.

The protein resides in the host Golgi apparatus membrane. The chain is Membrane protein 0 from Homo sapiens (Human).